The primary structure comprises 955 residues: Kinesin heavy chain isoform 5C (955 aa).

Positions 8–327 constitute a Kinesin motor domain; the sequence is SIKVMCRFRP…LMFGQRAKTI (320 aa). The ATP site is built by Q87, S89, S90, G91, K92, T93, H94, and K99. Residues 174–315 form a microtubule-binding region; it reads VSSPEEVMDV…PSVFNEAETK (142 aa). Residues 332-366 adopt a coiled-coil conformation; it reads SVNLELTAEEWKKKYEKEKEKNKALKSVIQHLEVE. T403 is modified (phosphothreonine). Coiled-coil stretches lie at residues 413–538 and 590–913; these read KEKY…LQEL and ISKM…KNMA. The interval 859 to 955 is globular; that stretch reads CELPKLEKRL…GSSNSTHYQK (97 aa). The interval 909 to 955 is disordered; that stretch reads AKNMARRAHSAQIAKPIRPGHYPASSPTAVHAVRGGGGSSNSTHYQK.

Belongs to the TRAFAC class myosin-kinesin ATPase superfamily. Kinesin family. Kinesin subfamily. In terms of assembly, oligomer composed of two heavy chains and two light chains. Interacts with GRIP1. Interacts with TRAK1. Interacts with ZFYVE27. Interacts with KLC3.

It is found in the cytoplasm. Its subcellular location is the cytoskeleton. The protein resides in the cell projection. The protein localises to the dendrite. The catalysed reaction is ATP + H2O = ADP + phosphate + H(+). In terms of biological role, microtubule-associated force-producing protein that may play a role in organelle transport. Has ATPase activity. Involved in synaptic transmission. Mediates dendritic trafficking of mRNAs. Required for anterograde axonal transportation of MAPK8IP3/JIP3 which is essential for MAPK8IP3/JIP3 function in axon elongation. The polypeptide is Kinesin heavy chain isoform 5C (Kif5c) (Rattus norvegicus (Rat)).